Consider the following 196-residue polypeptide: ATP-dependent Clp protease proteolytic subunit (196 aa).

Catalysis depends on serine 101, which acts as the Nucleophile. Histidine 126 is an active-site residue.

It belongs to the peptidase S14 family. In terms of assembly, component of the chloroplastic Clp protease core complex.

Its subcellular location is the plastid. It localises to the chloroplast stroma. It catalyses the reaction Hydrolysis of proteins to small peptides in the presence of ATP and magnesium. alpha-casein is the usual test substrate. In the absence of ATP, only oligopeptides shorter than five residues are hydrolyzed (such as succinyl-Leu-Tyr-|-NHMec, and Leu-Tyr-Leu-|-Tyr-Trp, in which cleavage of the -Tyr-|-Leu- and -Tyr-|-Trp bonds also occurs).. In terms of biological role, cleaves peptides in various proteins in a process that requires ATP hydrolysis. Has a chymotrypsin-like activity. Plays a major role in the degradation of misfolded proteins. In Pinus thunbergii (Japanese black pine), this protein is ATP-dependent Clp protease proteolytic subunit.